The primary structure comprises 188 residues: UPF0398 protein SE_1135 (188 aa).

The protein belongs to the UPF0398 family.

In Staphylococcus epidermidis (strain ATCC 12228 / FDA PCI 1200), this protein is UPF0398 protein SE_1135.